The following is a 433-amino-acid chain: Xylose isomerase (433 aa).

Catalysis depends on residues H97 and D100. The Mg(2+) site is built by E228, E264, H267, D292, D303, D305, and D334.

The protein belongs to the xylose isomerase family. As to quaternary structure, homotetramer. Requires Mg(2+) as cofactor.

It localises to the cytoplasm. The enzyme catalyses alpha-D-xylose = alpha-D-xylulofuranose. The chain is Xylose isomerase from Fervidobacterium gondwanense.